Reading from the N-terminus, the 99-residue chain is uncharacterized protein (99 aa).

The stretch at 3–68 (ERLKAITNLL…EKFDSNRKFY (66 aa)) forms a coiled coil.

This is an uncharacterized protein from Aquifex aeolicus (strain VF5).